Reading from the N-terminus, the 127-residue chain is Insulin-like growth factor 3.L (127 aa).

An N-terminal signal peptide occupies residues 1-49 (MPVTAMCLQDSKKLKKAKLTRKKVTPFPFSRMVLCLSLVFTLYVEATNA). Residues 49 to 80 (ARCLRPRSKELLCGSELVDILQFICGPTGFYV) are b. 3 disulfides stabilise this stretch: cysteine 61–cysteine 99, cysteine 73–cysteine 112, and cysteine 98–cysteine 103. Positions 81 to 92 (SKGASFRNRNRP) are c. Positions 93-113 (GIVEECCFCGCSVAILESYCA) are a. Residues 114-121 (APVTNFTG) are d. Residues 122–127 (REEQKS) constitute a propeptide, e peptide.

The protein belongs to the insulin family.

The protein localises to the secreted. Functionally, the insulin-like growth factors, isolated from plasma, are structurally and functionally related to insulin but have a much higher growth-promoting activity. Promotes anterior neural development. The polypeptide is Insulin-like growth factor 3.L (Xenopus laevis (African clawed frog)).